The following is a 118-amino-acid chain: HTH-type transcriptional regulator SarT (118 aa).

A DNA-binding region (H-T-H motif) is located at residues 55 to 78 (MRDIISYIGIDQSRIVKSVKELSK).

This sequence belongs to the SarA family.

It is found in the cytoplasm. Functionally, transcriptional regulator acting as an intermediary between major regulators SarA and agr and virulence genes. Represses alpha-hemolysin (hla) gene expression. The chain is HTH-type transcriptional regulator SarT (sarT) from Staphylococcus aureus (strain Mu50 / ATCC 700699).